The following is a 121-amino-acid chain: Heme-degrading monooxygenase (121 aa).

Residues 2–101 (IIVTNTIKVE…EQREDRKGIV (100 aa)) form the ABM domain. Asn-6 is a binding site for Fe cation. The segment at 76–98 (KSDSFKKAHGRTKDTREQREDRK) is disordered. Residues 78–98 (DSFKKAHGRTKDTREQREDRK) are compositionally biased toward basic and acidic residues. His-84 contributes to the heme binding site.

The protein belongs to the antibiotic biosynthesis monooxygenase family. Heme-degrading monooxygenase IsdG subfamily. In terms of assembly, homodimer.

It is found in the cytoplasm. The catalysed reaction is heme b + 3 reduced [NADPH--hemoprotein reductase] + 3 O2 = biliverdin IXalpha + CO + Fe(2+) + 3 oxidized [NADPH--hemoprotein reductase] + 3 H2O + H(+). In terms of biological role, allows bacterial pathogens to use the host heme as an iron source. Catalyzes the oxidative degradation of the heme macrocyclic porphyrin ring to the biliverdin in the presence of a suitable electron donor such as ascorbate or NADPH--cytochrome P450 reductase, with subsequent release of free iron. This chain is Heme-degrading monooxygenase, found in Listeria welshimeri serovar 6b (strain ATCC 35897 / DSM 20650 / CCUG 15529 / CIP 8149 / NCTC 11857 / SLCC 5334 / V8).